Here is a 247-residue protein sequence, read N- to C-terminus: ATP synthase subunit a, chloroplastic (247 aa).

Transmembrane regions (helical) follow at residues Q38–V58, V95–L115, I134–S154, L199–L219, and G220–G240.

The protein belongs to the ATPase A chain family. F-type ATPases have 2 components, CF(1) - the catalytic core - and CF(0) - the membrane proton channel. CF(1) has five subunits: alpha(3), beta(3), gamma(1), delta(1), epsilon(1). CF(0) has four main subunits: a, b, b' and c.

The protein localises to the plastid. It localises to the chloroplast thylakoid membrane. Its function is as follows. Key component of the proton channel; it plays a direct role in the translocation of protons across the membrane. This Cucumis sativus (Cucumber) protein is ATP synthase subunit a, chloroplastic.